The following is a 319-amino-acid chain: MASLGAGAEPESVLFGKDGTEACESPEGRRSGRRKRTKIVPVWENKPCGSSRSLVRRIGSHLPLKPCTRACFEALPPASNLYLTDTPMVPTLADVKWLAADEDETYARVRSDTRPLKHKWRPSPLLVMQRNSSVPNLKMKEEKMFCLKKPGLSLNRSSDIQEELSILRSQIARIVAGDSASSCLGSDSIPVNVDLEASLPDYGPSYQSTTSFVISDITEEDELDVSEYSSASLVDSTISLQRQVESNMSDDDEDSLCLSKSNSFADMMGILKDIHKMKLNRDWSNRNQCLHKEEDPVNLISEVLRQKFALCDPDSVKNE.

Positions 1-35 are disordered; it reads MASLGAGAEPESVLFGKDGTEACESPEGRRSGRRK.

The protein belongs to the MTFR1 family.

It is found in the mitochondrion outer membrane. In terms of biological role, mitochondrial protein required for adaptation of miochondrial dynamics to metabolic changes. Regulates mitochondrial morphology at steady state and mediates AMPK-dependent stress-induced mitochondrial fragmentation via the control of OPA1 levels. This is Mitochondrial fission regulator 1-like (mtfr1l) from Xenopus tropicalis (Western clawed frog).